A 211-amino-acid polypeptide reads, in one-letter code: tRNA (guanine-N(7)-)-methyltransferase (211 aa).

S-adenosyl-L-methionine is bound by residues glutamate 44, aspartate 69, aspartate 96, and aspartate 118. The active site involves aspartate 118. Lysine 122 contributes to the substrate binding site. An interaction with RNA region spans residues 124–129; sequence KHEKRR. Substrate-binding positions include aspartate 154 and 191–194; that span reads TEYE.

It belongs to the class I-like SAM-binding methyltransferase superfamily. TrmB family.

The enzyme catalyses guanosine(46) in tRNA + S-adenosyl-L-methionine = N(7)-methylguanosine(46) in tRNA + S-adenosyl-L-homocysteine. It participates in tRNA modification; N(7)-methylguanine-tRNA biosynthesis. Its function is as follows. Catalyzes the formation of N(7)-methylguanine at position 46 (m7G46) in tRNA. This Streptococcus pyogenes serotype M18 (strain MGAS8232) protein is tRNA (guanine-N(7)-)-methyltransferase.